The primary structure comprises 265 residues: Small ribosomal subunit protein uS2 (265 aa).

Belongs to the universal ribosomal protein uS2 family.

The protein is Small ribosomal subunit protein uS2 of Ligilactobacillus salivarius (strain UCC118) (Lactobacillus salivarius).